Here is a 234-residue protein sequence, read N- to C-terminus: Large ribosomal subunit protein uL1 (234 aa).

Belongs to the universal ribosomal protein uL1 family. As to quaternary structure, part of the 50S ribosomal subunit.

Binds directly to 23S rRNA. The L1 stalk is quite mobile in the ribosome, and is involved in E site tRNA release. In terms of biological role, protein L1 is also a translational repressor protein, it controls the translation of the L11 operon by binding to its mRNA. The sequence is that of Large ribosomal subunit protein uL1 from Desulfatibacillum aliphaticivorans.